The following is a 306-amino-acid chain: Acetaldehyde dehydrogenase 2/3 (306 aa).

Residue cysteine 130 is the Acyl-thioester intermediate of the active site. NAD(+) is bound by residues 161-169 (SAGPGTRKN) and asparagine 272.

Belongs to the acetaldehyde dehydrogenase family.

It catalyses the reaction acetaldehyde + NAD(+) + CoA = acetyl-CoA + NADH + H(+). This is Acetaldehyde dehydrogenase 2/3 (mhpF) from Azoarcus sp. (strain BH72).